We begin with the raw amino-acid sequence, 226 residues long: ATP synthase F(0) complex subunit a (226 aa).

Residue methionine 1 is modified to N-formylmethionine. 6 consecutive transmembrane segments (helical) span residues 9 to 29 (FITP…FPSL), 68 to 88 (WTLM…LGLL), 97 to 117 (QLSM…ITGF), 138 to 158 (IPML…ALAV), 164 to 184 (ITAG…LMSI), and 189 to 209 (ALIT…VAMI).

This sequence belongs to the ATPase A chain family. Component of the ATP synthase complex composed at least of ATP5F1A/subunit alpha, ATP5F1B/subunit beta, ATP5MC1/subunit c (homooctomer), MT-ATP6/subunit a, MT-ATP8/subunit 8, ATP5ME/subunit e, ATP5MF/subunit f, ATP5MG/subunit g, ATP5MK/subunit k, ATP5MJ/subunit j, ATP5F1C/subunit gamma, ATP5F1D/subunit delta, ATP5F1E/subunit epsilon, ATP5PF/subunit F6, ATP5PB/subunit b, ATP5PD/subunit d, ATP5PO/subunit OSCP. ATP synthase complex consists of a soluble F(1) head domain (subunits alpha(3) and beta(3)) - the catalytic core - and a membrane F(0) domain - the membrane proton channel (subunits c, a, 8, e, f, g, k and j). These two domains are linked by a central stalk (subunits gamma, delta, and epsilon) rotating inside the F1 region and a stationary peripheral stalk (subunits F6, b, d, and OSCP). Interacts with DNAJC30; interaction is direct.

It localises to the mitochondrion inner membrane. The enzyme catalyses H(+)(in) = H(+)(out). Subunit a, of the mitochondrial membrane ATP synthase complex (F(1)F(0) ATP synthase or Complex V) that produces ATP from ADP in the presence of a proton gradient across the membrane which is generated by electron transport complexes of the respiratory chain. ATP synthase complex consist of a soluble F(1) head domain - the catalytic core - and a membrane F(1) domain - the membrane proton channel. These two domains are linked by a central stalk rotating inside the F(1) region and a stationary peripheral stalk. During catalysis, ATP synthesis in the catalytic domain of F(1) is coupled via a rotary mechanism of the central stalk subunits to proton translocation. With the subunit c (ATP5MC1), forms the proton-conducting channel in the F(0) domain, that contains two crucial half-channels (inlet and outlet) that facilitate proton movement from the mitochondrial intermembrane space (IMS) into the matrix. Protons are taken up via the inlet half-channel and released through the outlet half-channel, following a Grotthuss mechanism. The chain is ATP synthase F(0) complex subunit a from Bos taurus (Bovine).